Here is a 94-residue protein sequence, read N- to C-terminus: Co-chaperonin GroES (94 aa).

Belongs to the GroES chaperonin family. Heptamer of 7 subunits arranged in a ring. Interacts with the chaperonin GroEL.

Its subcellular location is the cytoplasm. Functionally, together with the chaperonin GroEL, plays an essential role in assisting protein folding. The GroEL-GroES system forms a nano-cage that allows encapsulation of the non-native substrate proteins and provides a physical environment optimized to promote and accelerate protein folding. GroES binds to the apical surface of the GroEL ring, thereby capping the opening of the GroEL channel. The sequence is that of Co-chaperonin GroES from Clostridioides difficile (strain 630) (Peptoclostridium difficile).